We begin with the raw amino-acid sequence, 837 residues long: Katanin p80 WD40 repeat-containing subunit B1 homolog KTN80.4 (837 aa).

7 WD repeats span residues 14 to 54, 57 to 96, 99 to 138, 141 to 182, 184 to 222, 225 to 265, and 267 to 304; these read AHSA…AILS, GHSS…IVRT, GHRS…CIHT, GHTR…TEFK, HEGQ…LIGS, PETA…DGVD, and GWSR…TEPC. The DWD box motif lies at 115–131; sequence FFASGSLDTNLKIWDIR. Disordered stretches follow at residues 307-328, 358-462, and 501-614; these read GDTA…DPVV, GRLS…ANPV, and LQAA…LVIN. Polar residues-rich tracts occupy residues 376–387 and 412–450; these read IGRSSTSQNSES and TFSS…TSRR. Positions 509–520 are enriched in low complexity; it reads SPSSRNNPDLPD. Composition is skewed to basic and acidic residues over residues 553–563 and 580–595; these read ATERSINDFRY and RNHD…RSNR.

The protein belongs to the WD repeat KATNB1 family. In terms of assembly, component of KTN80-KTN1 complexes composed of a hexamer of KTN1-KTN80 heterodimers that sense microtubule (MT) geometry to confer precise MT severing. Interacts directly with AAA1/KTN1, and weakly with KTN80.1 and KTN80.3. Expressed in siliques, flowers, leaves, stems and roots.

The protein resides in the cytoplasm. It is found in the cytoskeleton. May participate in a complex which severs microtubules in an ATP-dependent manner. This activity may promote rapid reorganization of cellular microtubule arrays. Confers precision to microtubule (MT) severing by specific targeting of KTN1 to MT cleavage sites such as crossover or branching nucleation sites. Together with other KTN80s, regulates cell elongation by modulating MT organization. This chain is Katanin p80 WD40 repeat-containing subunit B1 homolog KTN80.4, found in Arabidopsis thaliana (Mouse-ear cress).